Here is a 231-residue protein sequence, read N- to C-terminus: Flagellar L-ring protein (231 aa).

A signal peptide spans 1 to 18 (MNRLMIVSLLGIATALGG). Cys-19 carries N-palmitoyl cysteine lipidation. Cys-19 carries S-diacylglycerol cysteine lipidation. Positions 118–141 (LSLSAEYGGSRDAKGDSQAGQSNS) are disordered.

Belongs to the FlgH family. In terms of assembly, the basal body constitutes a major portion of the flagellar organelle and consists of four rings (L,P,S, and M) mounted on a central rod.

The protein resides in the cell outer membrane. Its subcellular location is the bacterial flagellum basal body. Functionally, assembles around the rod to form the L-ring and probably protects the motor/basal body from shearing forces during rotation. In Pseudomonas aeruginosa (strain UCBPP-PA14), this protein is Flagellar L-ring protein.